A 190-amino-acid chain; its full sequence is Photosynthetic NDH subunit of lumenal location 2, chloroplastic (190 aa).

A chloroplast-targeting transit peptide spans M1–C31. The N-terminal 37 residues, C32–K68, are a transit peptide targeting the thylakoid. Coiled-coil stretches lie at residues E87–L107 and E139–L159.

This sequence belongs to the PsbQ family. In terms of assembly, part of the chloroplast NDH complex, composed of a mixture of chloroplast and nucleus encoded subunits. Component of the NDH lumenal subcomplex, at least composed of PnsL1, PnsL2, PnsL3, PnsL4 and PnsL5.

The protein localises to the plastid. It localises to the chloroplast thylakoid membrane. Functionally, NDH shuttles electrons from NAD(P)H:plastoquinone, via FMN and iron-sulfur (Fe-S) centers, to quinones in the photosynthetic chain and possibly in a chloroplast respiratory chain. The immediate electron acceptor for the enzyme in this species is believed to be plastoquinone. Couples the redox reaction to proton translocation, and thus conserves the redox energy in a proton gradient. Required for both formation and activity of the chloroplast NAD(P)H dehydrogenase (NDH) complex. This is Photosynthetic NDH subunit of lumenal location 2, chloroplastic from Arabidopsis thaliana (Mouse-ear cress).